Consider the following 92-residue polypeptide: Small ribosomal subunit protein uS19 (92 aa).

Belongs to the universal ribosomal protein uS19 family.

Functionally, protein S19 forms a complex with S13 that binds strongly to the 16S ribosomal RNA. This chain is Small ribosomal subunit protein uS19, found in Caulobacter vibrioides (strain ATCC 19089 / CIP 103742 / CB 15) (Caulobacter crescentus).